Consider the following 247-residue polypeptide: Spermatogenesis-associated protein 46 (247 aa).

A disordered region spans residues 125–164; that stretch reads QRDSCLPEDTADSVCSSSPSPENTCPREATKKSRPGPDTT. A compositionally biased stretch (polar residues) spans 137–147; that stretch reads SVCSSSPSPEN.

It localises to the nucleus membrane. In terms of biological role, plays a role in spermiogenesis and fertilization. The chain is Spermatogenesis-associated protein 46 (SPATA46) from Bos taurus (Bovine).